The following is a 183-amino-acid chain: Beta-defensin 129 (183 aa).

The N-terminal stretch at 1-19 (MKLLFPIFASLMLQYQVNT) is a signal peptide. 3 cysteine pairs are disulfide-bonded: Cys27–Cys53, Cys34–Cys48, and Cys38–Cys54. The segment at 142 to 183 (ATSAKSNTKESGDSATASPPPAPPPPNILPTPSLELEEAEEQ) is disordered. A compositionally biased stretch (pro residues) spans 159-170 (SPPPAPPPPNIL).

This sequence belongs to the beta-defensin family.

It localises to the secreted. Has antibacterial activity. The chain is Beta-defensin 129 (DEFB129) from Macaca fascicularis (Crab-eating macaque).